The sequence spans 129 residues: Small ribosomal subunit protein uS11c (129 aa).

Belongs to the universal ribosomal protein uS11 family. In terms of assembly, part of the 30S ribosomal subunit.

The protein localises to the plastid. Its subcellular location is the chloroplast. This Cyanidium caldarium (Red alga) protein is Small ribosomal subunit protein uS11c.